The following is a 327-amino-acid chain: Acetyl-coenzyme A carboxylase carboxyl transferase subunit alpha (327 aa).

In terms of domain architecture, CoA carboxyltransferase C-terminal spans 46–299 (LEARAIQLRR…RQVLLRHLKD (254 aa)).

Belongs to the AccA family. As to quaternary structure, acetyl-CoA carboxylase is a heterohexamer composed of biotin carboxyl carrier protein (AccB), biotin carboxylase (AccC) and two subunits each of ACCase subunit alpha (AccA) and ACCase subunit beta (AccD).

The protein resides in the cytoplasm. The catalysed reaction is N(6)-carboxybiotinyl-L-lysyl-[protein] + acetyl-CoA = N(6)-biotinyl-L-lysyl-[protein] + malonyl-CoA. It functions in the pathway lipid metabolism; malonyl-CoA biosynthesis; malonyl-CoA from acetyl-CoA: step 1/1. Component of the acetyl coenzyme A carboxylase (ACC) complex. First, biotin carboxylase catalyzes the carboxylation of biotin on its carrier protein (BCCP) and then the CO(2) group is transferred by the carboxyltransferase to acetyl-CoA to form malonyl-CoA. The sequence is that of Acetyl-coenzyme A carboxylase carboxyl transferase subunit alpha from Synechococcus elongatus (strain ATCC 33912 / PCC 7942 / FACHB-805) (Anacystis nidulans R2).